A 437-amino-acid chain; its full sequence is Adenylosuccinate synthetase (437 aa).

GTP-binding positions include 12-18 (GDEGKGK) and 40-42 (GHT). Aspartate 13 serves as the catalytic Proton acceptor. Residues aspartate 13 and glycine 40 each coordinate Mg(2+). Residues 13–16 (DEGK), 38–41 (NAGH), threonine 128, arginine 142, glutamine 223, threonine 238, and arginine 302 contribute to the IMP site. Histidine 41 functions as the Proton donor in the catalytic mechanism. Residue 298–304 (TTTGRRR) coordinates substrate. GTP is bound by residues arginine 304, 330-332 (KLD), and 412-414 (SLG).

It belongs to the adenylosuccinate synthetase family. Homodimer. Mg(2+) is required as a cofactor.

Its subcellular location is the cytoplasm. It carries out the reaction IMP + L-aspartate + GTP = N(6)-(1,2-dicarboxyethyl)-AMP + GDP + phosphate + 2 H(+). It functions in the pathway purine metabolism; AMP biosynthesis via de novo pathway; AMP from IMP: step 1/2. Its function is as follows. Plays an important role in the de novo pathway of purine nucleotide biosynthesis. Catalyzes the first committed step in the biosynthesis of AMP from IMP. This chain is Adenylosuccinate synthetase, found in Synechococcus sp. (strain CC9311).